We begin with the raw amino-acid sequence, 449 residues long: Elongation factor 1-alpha 1 (449 aa).

The tr-type G domain occupies 5–230 (KFHINIVVIG…DQINEPKRPS (226 aa)). A G1 region spans residues 14-21 (GHVDSGKS). 14-21 (GHVDSGKS) contacts GTP. Lys-55 is subject to N6,N6-dimethyllysine. Positions 70-74 (GITID) are G2. Residue Lys-79 is modified to N6,N6,N6-trimethyllysine. Residues 91 to 94 (DAPG) form a G3 region. GTP is bound by residues 91-95 (DAPGH) and 153-156 (NKMD). Residues 153-156 (NKMD) are G4. An N6,N6,N6-trimethyllysine modification is found at Lys-187. Residues 194–196 (SGF) form a G5 region. Lys-261 bears the N6-methyllysine mark. 2 positions are modified to N6,N6,N6-trimethyllysine: Lys-306 and Lys-396. Residues Lys-438 and Lys-441 each participate in a glycyl lysine isopeptide (Lys-Gly) (interchain with G-Cter in ubiquitin) cross-link.

This sequence belongs to the TRAFAC class translation factor GTPase superfamily. Classic translation factor GTPase family. EF-Tu/EF-1A subfamily.

The protein resides in the cytoplasm. Functionally, this protein promotes the GTP-dependent binding of aminoacyl-tRNA to the A-site of ribosomes during protein biosynthesis. The protein is Elongation factor 1-alpha 1 (A1) of Arabidopsis thaliana (Mouse-ear cress).